The chain runs to 98 residues: NADH-ubiquinone oxidoreductase chain 4L (98 aa).

The next 3 helical transmembrane spans lie at 1–21, 29–49, and 61–81; these read MSLVHINVLIAFTVSLTGLLM, ALLCLEGMVLSLFILAALTIL, and IILLVFAACEAAIGLALLVMV.

This sequence belongs to the complex I subunit 4L family. As to quaternary structure, core subunit of respiratory chain NADH dehydrogenase (Complex I) which is composed of 45 different subunits.

It localises to the mitochondrion inner membrane. It carries out the reaction a ubiquinone + NADH + 5 H(+)(in) = a ubiquinol + NAD(+) + 4 H(+)(out). In terms of biological role, core subunit of the mitochondrial membrane respiratory chain NADH dehydrogenase (Complex I) which catalyzes electron transfer from NADH through the respiratory chain, using ubiquinone as an electron acceptor. Part of the enzyme membrane arm which is embedded in the lipid bilayer and involved in proton translocation. This chain is NADH-ubiquinone oxidoreductase chain 4L (MT-ND4L), found in Lagenorhynchus albirostris (White-beaked dolphin).